The chain runs to 499 residues: Inosine-5'-monophosphate dehydrogenase (499 aa).

CBS domains follow at residues 106 to 165 (IDRE…SDAV) and 169 to 225 (MTDE…GSAA). NAD(+) is bound by residues D260 and 308 to 310 (GIG). 2 residues coordinate K(+): G310 and G312. S313 contacts IMP. Residue C315 coordinates K(+). The Thioimidate intermediate role is filled by C315. IMP contacts are provided by residues 348-350 (DGG), 371-372 (GS), and 395-399 (YRGMG). The active-site Proton acceptor is the R411. Residue E425 coordinates IMP. Residues E479, G480, and H481 each contribute to the K(+) site. The disordered stretch occupies residues 480-499 (GHPHDVMITDEAPNYSPQGE).

Belongs to the IMPDH/GMPR family. Homotetramer. K(+) serves as cofactor.

The catalysed reaction is IMP + NAD(+) + H2O = XMP + NADH + H(+). It functions in the pathway purine metabolism; XMP biosynthesis via de novo pathway; XMP from IMP: step 1/1. Mycophenolic acid (MPA) is a non-competitive inhibitor that prevents formation of the closed enzyme conformation by binding to the same site as the amobile flap. In contrast, mizoribine monophosphate (MZP) is a competitive inhibitor that induces the closed conformation. MPA is a potent inhibitor of mammalian IMPDHs but a poor inhibitor of the bacterial enzymes. MZP is a more potent inhibitor of bacterial IMPDH. Its function is as follows. Catalyzes the conversion of inosine 5'-phosphate (IMP) to xanthosine 5'-phosphate (XMP), the first committed and rate-limiting step in the de novo synthesis of guanine nucleotides, and therefore plays an important role in the regulation of cell growth. The polypeptide is Inosine-5'-monophosphate dehydrogenase (Halobacterium salinarum (strain ATCC 700922 / JCM 11081 / NRC-1) (Halobacterium halobium)).